We begin with the raw amino-acid sequence, 218 residues long: Small ribosomal subunit protein uS3c (218 aa).

Positions 47 to 118 (VQKNMRTSSG…KLNIAVTRIA (72 aa)) constitute a KH type-2 domain.

This sequence belongs to the universal ribosomal protein uS3 family. In terms of assembly, part of the 30S ribosomal subunit.

The protein resides in the plastid. The protein localises to the chloroplast. The sequence is that of Small ribosomal subunit protein uS3c (rps3) from Nicotiana tomentosiformis (Tobacco).